Consider the following 907-residue polypeptide: CRM-domain containing factor CFM3B, chloroplastic (907 aa).

Residues 1–59 (MAINSSHHFCPMTTTTTTSAKFVDSLGSSFCKFHGTSSSISLRSYRFGFSFMKNVKRLS) constitute a chloroplast transit peptide. 2 disordered regions span residues 62-89 (GSSSSSSSRNENWNRTQKQNQFRPSKVV) and 101-123 (LGVISGENSSRSGDVGGGSGSSS). Residues 70 to 84 (RNENWNRTQKQNQFR) are compositionally biased toward polar residues. 2 CRM domains span residues 220–316 (MTLS…DGSG) and 421–518 (STLG…EVGE). The stretch at 621–654 (SAKLVRKLERKLAFAEKKLLKAERALAKVEESLK) forms a coiled coil. Residues 663–763 (EGITEEERFM…KDYKRPTTLR (101 aa)) form the CRM 3 domain. Residues 824 to 907 (MAYSSDEETE…LQNEELDVQP (84 aa)) are disordered. Composition is skewed to acidic residues over residues 828–857 (SDEETEETDGEEDDVYLDTYEDEGEDDEEG) and 868–881 (TDVEFGSDESDTDF). The span at 882–897 (GDNSASSTTPETTFVE) shows a compositional bias: polar residues.

In terms of assembly, interacts with RNA. Part of large ribonucleo-protein particles that contain CAF1 and/or CAF2, and RNC1. Interacts with RFC3 in plastids. Expressed at low levels in roots and shoots.

It is found in the plastid. It localises to the chloroplast. Its function is as follows. Binds specific group II introns in chloroplasts and facilitates their splicing. Exhibits non-specific action during plastid rRNA biogenesis; RFC3 prevents unaccurate splicing to improve the accuracy of plastid rRNA processing. Acts on subgroup IIB introns. The substrates of the subgroup IIB also require the CRM domain proteins CAF1 or CAF2, with a simultaneous binding of CFM3B and CAF1 or CAF2. Required for seed development. The polypeptide is CRM-domain containing factor CFM3B, chloroplastic (Arabidopsis thaliana (Mouse-ear cress)).